The following is a 632-amino-acid chain: Sodium- and chloride-dependent GABA transporter 3 (632 aa).

The interval 1–41 (MTAEKALPLGNGKAAEEARESEAPGGGCSSGGAAPARHPRV) is disordered. Residues 1–58 (MTAEKALPLGNGKAAEEARESEAPGGGCSSGGAAPARHPRVKRDKAVHERGHWNNKVE) are Cytoplasmic-facing. S21 bears the Phosphoserine mark. Transmembrane regions (helical) follow at residues 59 to 79 (FVLS…FPYL), 87 to 106 (AFLI…VFFL), and 131 to 151 (GIGY…IIIL). The Extracellular segment spans residues 152 to 225 (AWAIFYLSNC…DGIEHIGNLR (74 aa)). N187, N190, and N198 each carry an N-linked (GlcNAc...) asparagine glycan. Helical transmembrane passes span 226-244 (WELA…FCIW), 253-270 (VVYV…ILLI), 306-323 (IFFS…LGSY), 335-356 (IMLC…FSVL), 389-408 (MPLS…FLGL), 438-456 (LLIL…VMLT), 473-493 (GMCL…VYGS), 514-533 (WCWM…FFLI), and 553-571 (IGWL…WICI). Residues 572–632 (TVWKTEGTLP…AAITEKETHF (61 aa)) lie on the Cytoplasmic side of the membrane.

This sequence belongs to the sodium:neurotransmitter symporter (SNF) (TC 2.A.22) family. SLC6A11 subfamily. Widespread distribution in the brain.

It is found in the cell membrane. The enzyme catalyses 4-aminobutanoate(out) + chloride(out) + 2 Na(+)(out) = 4-aminobutanoate(in) + chloride(in) + 2 Na(+)(in). It carries out the reaction taurine(out) + chloride(out) + 2 Na(+)(out) = taurine(in) + chloride(in) + 2 Na(+)(in). The catalysed reaction is beta-alanine(out) + chloride(out) + 2 Na(+)(out) = beta-alanine(in) + chloride(in) + 2 Na(+)(in). It catalyses the reaction hypotaurine(out) + chloride(out) + 2 Na(+)(out) = hypotaurine(in) + chloride(in) + 2 Na(+)(in). GABA transport is inhibited by SNAP-5114. Mediates sodium- and chloride-dependent transport of gamma-aminobutyric acid (GABA). Can also mediate transport of beta-alanine and to a lower extent that of taurine and hypotaurine. The chain is Sodium- and chloride-dependent GABA transporter 3 (SLC6A11) from Homo sapiens (Human).